The following is a 364-amino-acid chain: Dihydroorotate dehydrogenase (quinone) (364 aa).

Residues 62-66 (AGFDK) and T86 each bind FMN. Substrate is bound at residue K66. A substrate-binding site is contributed by 111–115 (NRMGF). N142 and N175 together coordinate FMN. Position 175 (N175) interacts with substrate. The active-site Nucleophile is the S178. N180 serves as a coordination point for substrate. K216 and T244 together coordinate FMN. Residue 245–246 (NT) coordinates substrate. Residues G267, G296, and 317 to 318 (YT) each bind FMN.

This sequence belongs to the dihydroorotate dehydrogenase family. Type 2 subfamily. In terms of assembly, monomer. FMN serves as cofactor.

It localises to the cell membrane. The catalysed reaction is (S)-dihydroorotate + a quinone = orotate + a quinol. Its pathway is pyrimidine metabolism; UMP biosynthesis via de novo pathway; orotate from (S)-dihydroorotate (quinone route): step 1/1. Catalyzes the conversion of dihydroorotate to orotate with quinone as electron acceptor. This is Dihydroorotate dehydrogenase (quinone) from Anaeromyxobacter dehalogenans (strain 2CP-1 / ATCC BAA-258).